The chain runs to 368 residues: tRNA-specific 2-thiouridylase MnmA (368 aa).

Residues 11–18 (GMSGGVDS) and Met37 contribute to the ATP site. The interval 97–99 (NPD) is interaction with target base in tRNA. The active-site Nucleophile is Cys102. A disulfide bond links Cys102 and Cys199. Gly127 lines the ATP pocket. The tract at residues 149–151 (KDQ) is interaction with tRNA. Cys199 functions as the Cysteine persulfide intermediate in the catalytic mechanism. Residues 311-312 (RY) are interaction with tRNA.

It belongs to the MnmA/TRMU family. As to quaternary structure, interacts with TusE.

The protein resides in the cytoplasm. The enzyme catalyses S-sulfanyl-L-cysteinyl-[protein] + uridine(34) in tRNA + AH2 + ATP = 2-thiouridine(34) in tRNA + L-cysteinyl-[protein] + A + AMP + diphosphate + H(+). In terms of biological role, catalyzes the 2-thiolation of uridine at the wobble position (U34) of tRNA(Lys), tRNA(Glu) and tRNA(Gln), leading to the formation of s(2)U34, the first step of tRNA-mnm(5)s(2)U34 synthesis. Sulfur is provided by IscS, via a sulfur-relay system. Binds ATP and its substrate tRNAs. The sequence is that of tRNA-specific 2-thiouridylase MnmA from Salmonella paratyphi B (strain ATCC BAA-1250 / SPB7).